Here is a 304-residue protein sequence, read N- to C-terminus: Glucose-6-phosphate isomerase (304 aa).

The Proton donor role is filled by glutamate 146. Histidine 177 is an active-site residue.

Belongs to the GPI family.

It is found in the cytoplasm. The catalysed reaction is alpha-D-glucose 6-phosphate = beta-D-fructose 6-phosphate. Its pathway is carbohydrate degradation; glycolysis; D-glyceraldehyde 3-phosphate and glycerone phosphate from D-glucose: step 2/4. The protein is Glucose-6-phosphate isomerase (PGI) of Calanus finmarchicus (Calanus tonsus).